The sequence spans 174 residues: Repair DNA polymerase X (174 aa).

Residues 42-51 (REEKMLNDVD) are involved in ssDNA binding. Aspartate 49 and aspartate 51 together coordinate Mg(2+). Cysteine 81 and cysteine 86 are disulfide-bonded. Residue aspartate 100 coordinates Mg(2+).

The protein belongs to the DNA polymerase type-X family. The cofactor is Mg(2+).

It localises to the virion. It catalyses the reaction DNA(n) + a 2'-deoxyribonucleoside 5'-triphosphate = DNA(n+1) + diphosphate. Its function is as follows. Error-prone polymerase lacking a proofreading 3'-5' exonuclease which catalyzes the gap-filling reaction during the DNA repair process. Specifically binds intermediates in the single-nucleotide base-excision repair process. Also catalyzes DNA polymerization with low nucleotide-insertion fidelity. Probably acts as a strategic DNA mutase, which gives rise to a rapid emergence of variants. Generates mismatched G-G pairs, in that case, the polymerase first binds the deoxynucleotide followed by mismatch formation. Together with the viral DNA ligase, fills the single nucleotide gaps generated by the AP endonuclease. Binds DNA with high affinity via the helix alphaE. This chain is Repair DNA polymerase X, found in African swine fever virus (isolate Tick/Malawi/Lil 20-1/1983) (ASFV).